A 415-amino-acid polypeptide reads, in one-letter code: DNA polymerase IV (415 aa).

Positions 15-196 (ILHVDMNCFF…LPVGAMHGIG (182 aa)) constitute a UmuC domain. Mg(2+) contacts are provided by Asp-19 and Asp-115. Glu-116 is a catalytic residue. The tract at residues 238–260 (KGMDDRQVDPSQMGQHKSVGNSM) is disordered. Residues 246 to 260 (DPSQMGQHKSVGNSM) are compositionally biased toward polar residues.

The protein belongs to the DNA polymerase type-Y family. As to quaternary structure, monomer. Mg(2+) is required as a cofactor.

The protein localises to the cytoplasm. It carries out the reaction DNA(n) + a 2'-deoxyribonucleoside 5'-triphosphate = DNA(n+1) + diphosphate. Functionally, poorly processive, error-prone DNA polymerase involved in untargeted mutagenesis. Copies undamaged DNA at stalled replication forks, which arise in vivo from mismatched or misaligned primer ends. These misaligned primers can be extended by PolIV. Exhibits no 3'-5' exonuclease (proofreading) activity. May be involved in translesional synthesis, in conjunction with the beta clamp from PolIII. The protein is DNA polymerase IV of Bacillus cereus (strain ZK / E33L).